The chain runs to 990 residues: Activator of stress genes protein 1 (990 aa).

The segment at methionine 1 to arginine 88 is disordered. Polar residues predominate over residues threonine 9–glutamate 23. Positions serine 24–asparagine 61 are enriched in low complexity. A DNA-binding region (zn(2)-C6 fungal-type) is located at residues cysteine 95–cysteine 121. Low complexity-rich tracts occupy residues asparagine 160–valine 179, serine 282–serine 293, and threonine 773–serine 793. 4 disordered regions span residues asparagine 160–glutamate 192, glutamine 255–arginine 295, arginine 764–alanine 800, and serine 915–alanine 944.

This sequence belongs to the ASG1 family.

The protein localises to the nucleus. Its function is as follows. Transcription factor necessary to sustain growth on non-fermentative carbon sources such as sodium acetate, acetic acid, or ethanol. Plays a role in hyphal formation. This is Activator of stress genes protein 1 (ASG1) from Candida albicans (strain SC5314 / ATCC MYA-2876) (Yeast).